We begin with the raw amino-acid sequence, 152 residues long: Large ribosomal subunit protein uL22 (152 aa).

This sequence belongs to the universal ribosomal protein uL22 family. As to quaternary structure, part of the 50S ribosomal subunit.

Functionally, this protein binds specifically to 23S rRNA. It makes multiple contacts with different domains of the 23S rRNA in the assembled 50S subunit and ribosome. In terms of biological role, the globular domain of the protein is located near the polypeptide exit tunnel on the outside of the subunit, while an extended beta-hairpin is found that lines the wall of the exit tunnel in the center of the 70S ribosome. The polypeptide is Large ribosomal subunit protein uL22 (Methanothrix thermoacetophila (strain DSM 6194 / JCM 14653 / NBRC 101360 / PT) (Methanosaeta thermophila)).